We begin with the raw amino-acid sequence, 388 residues long: Chorismate synthase (388 aa).

The NADP(+) site is built by R39 and R45. Residues 130–132 (RSS), 251–252 (NA), G296, 311–315 (KPIPT), and R337 each bind FMN.

This sequence belongs to the chorismate synthase family. As to quaternary structure, homotetramer. FMNH2 is required as a cofactor.

It catalyses the reaction 5-O-(1-carboxyvinyl)-3-phosphoshikimate = chorismate + phosphate. It functions in the pathway metabolic intermediate biosynthesis; chorismate biosynthesis; chorismate from D-erythrose 4-phosphate and phosphoenolpyruvate: step 7/7. Functionally, catalyzes the anti-1,4-elimination of the C-3 phosphate and the C-6 proR hydrogen from 5-enolpyruvylshikimate-3-phosphate (EPSP) to yield chorismate, which is the branch point compound that serves as the starting substrate for the three terminal pathways of aromatic amino acid biosynthesis. This reaction introduces a second double bond into the aromatic ring system. The chain is Chorismate synthase from Lactococcus lactis subsp. cremoris (strain MG1363).